A 277-amino-acid chain; its full sequence is Putative phosphoenolpyruvate synthase regulatory protein (277 aa).

157–164 (GVSRSGKT) provides a ligand contact to ADP.

Belongs to the pyruvate, phosphate/water dikinase regulatory protein family. PSRP subfamily.

It catalyses the reaction [pyruvate, water dikinase] + ADP = [pyruvate, water dikinase]-phosphate + AMP + H(+). The enzyme catalyses [pyruvate, water dikinase]-phosphate + phosphate + H(+) = [pyruvate, water dikinase] + diphosphate. In terms of biological role, bifunctional serine/threonine kinase and phosphorylase involved in the regulation of the phosphoenolpyruvate synthase (PEPS) by catalyzing its phosphorylation/dephosphorylation. The polypeptide is Putative phosphoenolpyruvate synthase regulatory protein (Vibrio cholerae serotype O1 (strain ATCC 39541 / Classical Ogawa 395 / O395)).